Reading from the N-terminus, the 478-residue chain is Trigger factor (478 aa).

Basic and acidic residues predominate over residues Met154–Gly167. Disordered regions lie at residues Met154–Gly173 and Lys441–Gly478. The 86-residue stretch at Gly173 to Thr258 folds into the PPIase FKBP-type domain.

The protein belongs to the FKBP-type PPIase family. Tig subfamily.

Its subcellular location is the cytoplasm. The enzyme catalyses [protein]-peptidylproline (omega=180) = [protein]-peptidylproline (omega=0). Functionally, involved in protein export. Acts as a chaperone by maintaining the newly synthesized protein in an open conformation. Functions as a peptidyl-prolyl cis-trans isomerase. In Methylorubrum extorquens (strain CM4 / NCIMB 13688) (Methylobacterium extorquens), this protein is Trigger factor.